The sequence spans 164 residues: Microfibrillar-associated protein 5 (164 aa).

The first 28 residues, 1 to 28 (MLFLGQKALLLVLAISIPSDWLPLGVSG), serve as a signal peptide directing secretion. The Cell attachment site signature appears at 30 to 32 (RGD). N-linked (GlcNAc...) asparagine glycosylation occurs at Asn70.

Belongs to the MFAP family. Interacts with TGFB2. Interacts with BMP2. Interacts with FBN1 (via N-terminal domain) and FBN2. Post-translationally, forms intermolecular disulfide bonds either with other MAGP-2 molecules or with other components of the microfibrils.

Its subcellular location is the secreted. The protein resides in the extracellular space. It is found in the extracellular matrix. In terms of biological role, may play a role in hematopoiesis. In the cardiovascular system, could regulate growth factors or participate in cell signaling in maintaining large vessel integrity. Component of the elastin-associated microfibrils. This Mus musculus (Mouse) protein is Microfibrillar-associated protein 5 (Mfap5).